The sequence spans 121 residues: Phosphoribosyl-ATP pyrophosphatase (121 aa).

Belongs to the PRA-PH family.

The protein localises to the cytoplasm. It catalyses the reaction 1-(5-phospho-beta-D-ribosyl)-ATP + H2O = 1-(5-phospho-beta-D-ribosyl)-5'-AMP + diphosphate + H(+). It functions in the pathway amino-acid biosynthesis; L-histidine biosynthesis; L-histidine from 5-phospho-alpha-D-ribose 1-diphosphate: step 2/9. The chain is Phosphoribosyl-ATP pyrophosphatase from Burkholderia cenocepacia (strain HI2424).